A 204-amino-acid polypeptide reads, in one-letter code: ATP synthase subunit b 2 (204 aa).

Positions 8–28 are disordered; that stretch reads AQSSTTEGAEAHDAAAAGEVH. Residues 56–76 form a helical membrane-spanning segment; that stretch reads LLWLAITFGLFYLLMSKVIIP.

It belongs to the ATPase B chain family. F-type ATPases have 2 components, F(1) - the catalytic core - and F(0) - the membrane proton channel. F(1) has five subunits: alpha(3), beta(3), gamma(1), delta(1), epsilon(1). F(0) has three main subunits: a(1), b(2) and c(10-14). The alpha and beta chains form an alternating ring which encloses part of the gamma chain. F(1) is attached to F(0) by a central stalk formed by the gamma and epsilon chains, while a peripheral stalk is formed by the delta and b chains.

It localises to the cell inner membrane. In terms of biological role, f(1)F(0) ATP synthase produces ATP from ADP in the presence of a proton or sodium gradient. F-type ATPases consist of two structural domains, F(1) containing the extramembraneous catalytic core and F(0) containing the membrane proton channel, linked together by a central stalk and a peripheral stalk. During catalysis, ATP synthesis in the catalytic domain of F(1) is coupled via a rotary mechanism of the central stalk subunits to proton translocation. Component of the F(0) channel, it forms part of the peripheral stalk, linking F(1) to F(0). The b'-subunit is a diverged and duplicated form of b found in plants and photosynthetic bacteria. The sequence is that of ATP synthase subunit b 2 (atpF2) from Rhizobium meliloti (strain 1021) (Ensifer meliloti).